Reading from the N-terminus, the 221-residue chain is Phosphoenolpyruvate guanylyltransferase (221 aa).

Thr154, Gly169, and Ser172 together coordinate phosphoenolpyruvate.

The protein belongs to the CofC family.

The catalysed reaction is phosphoenolpyruvate + GTP + H(+) = enolpyruvoyl-2-diphospho-5'-guanosine + diphosphate. It functions in the pathway cofactor biosynthesis; coenzyme F420 biosynthesis. Its function is as follows. Guanylyltransferase that catalyzes the activation of phosphoenolpyruvate (PEP) as enolpyruvoyl-2-diphospho-5'-guanosine, via the condensation of PEP with GTP. It is involved in the biosynthesis of coenzyme F420, a hydride carrier cofactor. The chain is Phosphoenolpyruvate guanylyltransferase from Mycolicibacterium smegmatis (strain ATCC 700084 / mc(2)155) (Mycobacterium smegmatis).